A 362-amino-acid polypeptide reads, in one-letter code: MSDDTEDDSGGESTADMEFGEQPAPLGVKVGSTRTVVAEDDADSPSVTQTLTCLATYDDALTGEEHVIYGAEAATEYPDRVRFMLRSGLPEDEETTGLAKRFFEEFASANGLDTDSVVVYAIPTIDNEAGLDRLAEIIEDGPVGERRIASYPESLCGAVPALGDGLDAIEDTFVAINMGSTNLEACAYRRGEQLAPFSTGAITGTEVDRRIANYVEEETQGRVNIDLTTAREYKEQHADFNDYEPFSDIIQQPGGGTYEFTIEDAVMDAVDEFVDAAVDEVANVFLPDLASDYVKIYQQALDNPIVLTGGMGCIPGIVSEFETRLGEEIDREVEATTADEPETAAARGAHRIAERLVDLGEY.

Positions 1–10 are enriched in acidic residues; that stretch reads MSDDTEDDSG. Residues 1-28 are disordered; the sequence is MSDDTEDDSGGESTADMEFGEQPAPLGV.

Forms dynamically unstable filaments. Monomers are added at the growing filament end. In vitro, salactin polymerizes in the presence of ATP and AMP-PNP but not in the presence of ADP, GTP, ATPgammaS or buffer alone.

It is found in the cytoplasm. In terms of biological role, actin homolog which might be involved in partitioning DNA between daughter cells when chromosomal copy number is low. This chain is Salactin, found in Halobacterium salinarum (strain ATCC 700922 / JCM 11081 / NRC-1) (Halobacterium halobium).